Here is a 141-residue protein sequence, read N- to C-terminus: Acetyltransferase YpeA (141 aa).

The region spanning 1-141 (MEIRVFRQED…GKRLIEDEEY (141 aa)) is the N-acetyltransferase domain.

Belongs to the acetyltransferase family. YpeA subfamily.

The polypeptide is Acetyltransferase YpeA (Escherichia coli O157:H7).